The primary structure comprises 495 residues: Cytochrome P450 monooxygenase cnsC (495 aa).

C434 is a binding site for heme.

It belongs to the cytochrome P450 family. Requires heme as cofactor.

Its pathway is alkaloid biosynthesis. In terms of biological role, cytochrome P450 monooxygenase; part of the gene cluster that mediates the biosynthesis of communesins, a prominent class of indole alkaloids with great potential as pharmaceuticals. Communesins are biosynthesized by the coupling of tryptamine and aurantioclavine, two building blocks derived from L-tryptophan. The L-tryptophan decarboxylase cnsB converts L-tryptophan to tryptamine, whereas the tryptophan dimethylallyltransferase cnsF converts L-tryptophan to 4-dimethylallyl tryptophan which is further transformed to aurantioclavine by the aurantioclavine synthase cnsA, probably aided by the catalase cnsD. The cytochrome P450 monooxygenase cnsC catalyzes the heterodimeric coupling between the two different indole moieties, tryptamine and aurantioclavine, to construct vicinal quaternary stereocenters and yield the heptacyclic communesin scaffold. The O-methyltransferase cnsE then methylates the communesin scaffold to produce communesin K, the simplest characterized communesin that contains the heptacyclic core. The dioxygenase cnsJ converts communesin K into communesin I. Acylation to introduce the hexadienyl group at position N16 of communesin I by the acyltransferase cnsK leads to the production of communesin B. The hexadienyl group is produced by the highly reducing polyketide synthase cnsI, before being hydrolytically removed from cnsI by the serine hydrolase cnsH, converted into hexadienyl-CoA by the CoA ligase cnsG, and then transferred to communesin I by cnsK. Surprisingly, cnsK may also be a promiscuous acyltransferase that can tolerate a range of acyl groups, including acetyl-, propionyl-, and butyryl-CoA, which lead to communesins A, G and H respectively. The roles of the alpha-ketoglutarate-dependent dioxygenases cnsM and cnsP have still to be determined. In Penicillium expansum (Blue mold rot fungus), this protein is Cytochrome P450 monooxygenase cnsC.